The primary structure comprises 99 residues: CLAVATA3/ESR (CLE)-related protein 17 (99 aa).

Positions 1–21 are cleaved as a signal peptide; sequence MTHVLVRRQGQGKKRRWDVNM. Basic and acidic residues predominate over residues 77-89; that stretch reads LSRDDIYGDDKRV. A disordered region spans residues 77–99; that stretch reads LSRDDIYGDDKRVVHTGPNPLHN. A Hydroxyproline modification is found at P94. O-linked (Ara...) hydroxyproline glycosylation occurs at P94.

Belongs to the CLV3/ESR signal peptide family. In terms of processing, the O-glycosylation (arabinosylation) of the hydroxyproline Pro-94 enhances binding affinity of the CLE17p peptide for its receptor. As to expression, mostly expressed in seedlings, roots, flowers, stems and apex, and, to a lower extent, in leaves and siliques.

It is found in the secreted. Its subcellular location is the extracellular space. Extracellular signal peptide that regulates cell fate. Represses root apical meristem maintenance. Regulates the transition of protophloem cells from proliferation to differentiation, thus impinging on postembryonic growth capacity of the root meristem; this signaling pathway requires CRN and CLV2. The chain is CLAVATA3/ESR (CLE)-related protein 17 from Arabidopsis thaliana (Mouse-ear cress).